A 233-amino-acid chain; its full sequence is Small ribosomal subunit protein uS2c (233 aa).

Belongs to the universal ribosomal protein uS2 family.

It is found in the plastid. It localises to the chloroplast. This is Small ribosomal subunit protein uS2c (rps2) from Galdieria sulphuraria (Red alga).